Consider the following 296-residue polypeptide: N-acetylmuramic acid 6-phosphate etherase (296 aa).

The SIS domain maps to 54–217; it reads VISCFQKGGR…STASMVGIGK (164 aa). The active-site Proton donor is Glu-82. Glu-113 is an active-site residue.

Belongs to the GCKR-like family. MurNAc-6-P etherase subfamily. Homodimer.

The enzyme catalyses N-acetyl-D-muramate 6-phosphate + H2O = N-acetyl-D-glucosamine 6-phosphate + (R)-lactate. It functions in the pathway amino-sugar metabolism; N-acetylmuramate degradation. Specifically catalyzes the cleavage of the D-lactyl ether substituent of MurNAc 6-phosphate, producing GlcNAc 6-phosphate and D-lactate. This chain is N-acetylmuramic acid 6-phosphate etherase, found in Listeria monocytogenes serotype 4b (strain CLIP80459).